A 285-amino-acid chain; its full sequence is Bifunctional protein FolD (285 aa).

Residues 163-165 (GRS) and Ser-188 contribute to the NADP(+) site.

The protein belongs to the tetrahydrofolate dehydrogenase/cyclohydrolase family. In terms of assembly, homodimer.

The enzyme catalyses (6R)-5,10-methylene-5,6,7,8-tetrahydrofolate + NADP(+) = (6R)-5,10-methenyltetrahydrofolate + NADPH. It catalyses the reaction (6R)-5,10-methenyltetrahydrofolate + H2O = (6R)-10-formyltetrahydrofolate + H(+). It participates in one-carbon metabolism; tetrahydrofolate interconversion. In terms of biological role, catalyzes the oxidation of 5,10-methylenetetrahydrofolate to 5,10-methenyltetrahydrofolate and then the hydrolysis of 5,10-methenyltetrahydrofolate to 10-formyltetrahydrofolate. The chain is Bifunctional protein FolD from Lactococcus lactis subsp. cremoris (strain MG1363).